The primary structure comprises 260 residues: 5'-nucleotidase SurE (260 aa).

Residues D8, D9, S39, and N91 each coordinate a divalent metal cation.

It belongs to the SurE nucleotidase family. It depends on a divalent metal cation as a cofactor.

It localises to the cytoplasm. The catalysed reaction is a ribonucleoside 5'-phosphate + H2O = a ribonucleoside + phosphate. Nucleotidase that shows phosphatase activity on nucleoside 5'-monophosphates. The protein is 5'-nucleotidase SurE of Acidovorax ebreus (strain TPSY) (Diaphorobacter sp. (strain TPSY)).